A 73-amino-acid polypeptide reads, in one-letter code: Small ribosomal subunit protein eS27 (73 aa).

Residues cysteine 28, cysteine 31, cysteine 47, and cysteine 50 each contribute to the Zn(2+) site. The C4-type zinc finger occupies 28–50 (CPKCGNRQVVFSHSTFRARCLNC).

It belongs to the eukaryotic ribosomal protein eS27 family. In terms of assembly, part of the 30S ribosomal subunit. It depends on Zn(2+) as a cofactor.

The chain is Small ribosomal subunit protein eS27 from Aeropyrum pernix (strain ATCC 700893 / DSM 11879 / JCM 9820 / NBRC 100138 / K1).